A 343-amino-acid chain; its full sequence is UDP-3-O-acylglucosamine N-acyltransferase (343 aa).

The active-site Proton acceptor is the histidine 239.

The protein belongs to the transferase hexapeptide repeat family. LpxD subfamily. As to quaternary structure, homotrimer.

It carries out the reaction a UDP-3-O-[(3R)-3-hydroxyacyl]-alpha-D-glucosamine + a (3R)-hydroxyacyl-[ACP] = a UDP-2-N,3-O-bis[(3R)-3-hydroxyacyl]-alpha-D-glucosamine + holo-[ACP] + H(+). It participates in bacterial outer membrane biogenesis; LPS lipid A biosynthesis. Functionally, catalyzes the N-acylation of UDP-3-O-acylglucosamine using 3-hydroxyacyl-ACP as the acyl donor. Is involved in the biosynthesis of lipid A, a phosphorylated glycolipid that anchors the lipopolysaccharide to the outer membrane of the cell. In Vibrio parahaemolyticus serotype O3:K6 (strain RIMD 2210633), this protein is UDP-3-O-acylglucosamine N-acyltransferase.